The sequence spans 146 residues: Sordarin/hypoxysordarin biosynthesis cluster protein G (146 aa).

Its pathway is antibiotic biosynthesis. Part of the gene cluster that mediates the biosynthesis of sordarin and hypoxysordarin, glycoside antibiotics with a unique tetracyclic diterpene aglycone structure. First, the geranylgeranyl diphosphate synthase sdnC constructs GGDP from farnesyl diphosphate and isopentenyl diphosphate. The diterpene cyclase sdnA then catalyzes the cyclization of GGDP to afford cycloaraneosene. Cycloaraneosene is then hydroxylated four times by the putative cytochrome P450 monooxygenases sdnB, sdnE, sdnF and sdnH to give a hydroxylated cycloaraneosene derivative such as cycloaraneosene-8,9,13,19-tetraol. Although the order of the hydroxylations is unclear, at least C8, C9 and C13 of the cycloaraneosene skeleton are hydroxylated before the sordaricin formation. Dehydration of the 13-hydroxy group of the hydroxylated cycloaraneosene derivative might be catalyzed by an unassigned hypothetical protein such as sdnG and sdnP to construct the cyclopentadiene moiety. The FAD-dependent oxidoreductase sdnN is proposed to catalyze the oxidation at C9 of the hydroxylated cycloaraneosene derivative and also catalyze the Baeyer-Villiger oxidation to give the lactone intermediate. The presumed lactone intermediate would be hydrolyzed to give an acrolein moiety and a carboxylate moiety. Then, [4+2]cycloaddition would occur between the acrolein moiety and the cyclopentadiene moiety to give sordaricin. SdnN might also be involved in the [4+2]cycloaddition after the hypothesized oxidation to accommodate the oxidized product and prompt the [4+2]cycloaddition. GDP-6-deoxy-D-altrose may be biosynthesized from GDP-D-mannose by the putative GDP-mannose-4,6-dehydratase sdnI and the short-chain dehydrogenase sdnK. The glycosyltransferase sdnJ catalyzes the attachment of 6-deoxy-D-altrose onto the 19-hydroxy group of sordaricin to give 4'-O-demethylsordarin. The methyltransferase sdnD would complete the biosynthesis of sordarin. Sordarin can be further modified into hypoxysordarin. The unique acyl chain at the 3'-hydroxy group of hypoxysordarin would be constructed by an iterative type I PKS sdnO and the trans-acting polyketide methyltransferase sdnL. SdnL would be responsible for the introduction of an alpha-methyl group of the polyketide chain. Alternatively, the beta-lactamase-like protein sdnR might be responsible for the cleavage and transfer of the polyketide chain from the PKS sdnO to sordarin. Two putative cytochrome P450 monooxygenases, sdnQ and sdnT, might catalyze the epoxidations of the polyketide chain to complete the biosynthesis of hypoxysordarin. Transcriptional regulators sdnM and sdnS are presumably encoded for the transcriptional regulation of the expression of the sdn gene cluster. The chain is Sordarin/hypoxysordarin biosynthesis cluster protein G from Sordaria araneosa (Pleurage araneosa).